Reading from the N-terminus, the 190-residue chain is Peptidyl-tRNA hydrolase (190 aa).

Y14 provides a ligand contact to tRNA. Catalysis depends on H19, which acts as the Proton acceptor. Residues Y64, N66, and N112 each contribute to the tRNA site.

This sequence belongs to the PTH family. As to quaternary structure, monomer.

The protein localises to the cytoplasm. It catalyses the reaction an N-acyl-L-alpha-aminoacyl-tRNA + H2O = an N-acyl-L-amino acid + a tRNA + H(+). In terms of biological role, hydrolyzes ribosome-free peptidyl-tRNAs (with 1 or more amino acids incorporated), which drop off the ribosome during protein synthesis, or as a result of ribosome stalling. Functionally, catalyzes the release of premature peptidyl moieties from peptidyl-tRNA molecules trapped in stalled 50S ribosomal subunits, and thus maintains levels of free tRNAs and 50S ribosomes. The sequence is that of Peptidyl-tRNA hydrolase from Pelodictyon phaeoclathratiforme (strain DSM 5477 / BU-1).